Here is a 491-residue protein sequence, read N- to C-terminus: (R)-citramalate synthase CimA (491 aa).

The 252-residue stretch at 3–254 folds into the Pyruvate carboxyltransferase domain; the sequence is VRIFDTTLRD…DTKIKMEKLY (252 aa).

The protein belongs to the alpha-IPM synthase/homocitrate synthase family. Homodimer.

It catalyses the reaction pyruvate + acetyl-CoA + H2O = (3R)-citramalate + CoA + H(+). It functions in the pathway amino-acid biosynthesis; L-isoleucine biosynthesis; 2-oxobutanoate from pyruvate: step 1/3. In terms of biological role, catalyzes the condensation of pyruvate and acetyl-coenzyme A to form (R)-citramalate. The chain is (R)-citramalate synthase CimA (cimA) from Methanocaldococcus jannaschii (strain ATCC 43067 / DSM 2661 / JAL-1 / JCM 10045 / NBRC 100440) (Methanococcus jannaschii).